The sequence spans 465 residues: Hepatocyte nuclear factor 6 (465 aa).

Disordered regions lie at residues 15 to 84 (GVSH…GPLH) and 119 to 141 (SDKF…HQRL). Positions 123-140 (PHHHHHHHHHHHPHHHQR) are enriched in basic residues. Positions 283–369 (GSNSGQMEEI…QRMSALRLAA (87 aa)) form a DNA-binding region, CUT. The homeobox DNA-binding region spans 385-444 (PKKPRLVFTDVQRRTLHAIFKENKRPSKELQITISQQLGLELSTVSNFFMNARRRSLDKW). Positions 443 to 465 (KWQDEGGSNSGSSSSSSSTCTKA) are disordered. The segment covering 448-465 (GGSNSGSSSSSSSTCTKA) has biased composition (low complexity).

The protein belongs to the CUT homeobox family. As to quaternary structure, binds DNA as a monomer.

Its subcellular location is the nucleus. Functionally, transcriptional activator. Binds the consensus sequence 5'-DHWATTGAYTWWD-3' on a variety of gene promoters such as those of HNF3B and TTR. Important for liver genes transcription. Stimulates the expression of Onecut3 in the developing endoderm. The chain is Hepatocyte nuclear factor 6 (Onecut1) from Mus musculus (Mouse).